The primary structure comprises 259 residues: 5'-nucleotidase SurE (259 aa).

A divalent metal cation is bound by residues D8, D9, S41, and N99.

It belongs to the SurE nucleotidase family. Requires a divalent metal cation as cofactor.

Its subcellular location is the cytoplasm. It catalyses the reaction a ribonucleoside 5'-phosphate + H2O = a ribonucleoside + phosphate. Nucleotidase that shows phosphatase activity on nucleoside 5'-monophosphates. The sequence is that of 5'-nucleotidase SurE from Synechococcus sp. (strain JA-3-3Ab) (Cyanobacteria bacterium Yellowstone A-Prime).